A 323-amino-acid polypeptide reads, in one-letter code: O-phosphoserine sulfhydrylase (323 aa).

Lysine 51 is modified (N6-(pyridoxal phosphate)lysine). Residues asparagine 81 and 184–188 (GTTGT) each bind pyridoxal 5'-phosphate. Arginine 220 contributes to the substrate binding site. Serine 265 contacts pyridoxal 5'-phosphate.

The protein belongs to the cysteine synthase/cystathionine beta-synthase family. Homodimer. Pyridoxal 5'-phosphate serves as cofactor.

It carries out the reaction [CysO sulfur-carrier protein]-C-terminal-Gly-aminoethanethioate + O-phospho-L-serine + H(+) = [CysO sulfur-carrier protein]-Gly-NH-CH2-C(O)-S-L-Cys + phosphate. Its pathway is amino-acid biosynthesis; L-cysteine biosynthesis. In terms of biological role, catalyzes the formation of a covalent CysO-cysteine adduct via a sulfur transfer, using the thiocarboxylated sulfur carrier protein CysO-COSH as sulfur donor and O-phospho-L-serine (OPS) as sulfur acceptor. Can also use sodium sulfide as sulfur donor in vitro, albeit with less efficiency. This Mycobacterium bovis (strain ATCC BAA-935 / AF2122/97) protein is O-phosphoserine sulfhydrylase (cysM).